A 259-amino-acid chain; its full sequence is MATIKEIKELLVTVKELESPIFLELEKDNRSGVQKEISKRKRAIQAELDENLRLESMLSYEKELYKQGLTLIAGIDEVGRGPLAGPVVAAAVILPKNCKIKGLNDSKKIPKKKHLEIFQAVQDQALSIGIGIIDNQVIDQVNIYEATKLAMQEAISQLSPQPEHLLIDAMKLDLPISQTSIIKGDANSLSIAAASIVAKVTRDELMKEYDQQFSGYDFATNAGYGTAKHLEGLTKLGVTPIHRTSFEPVKSLVLGKKES.

An RNase H type-2 domain is found at 70-258 (TLIAGIDEVG…VKSLVLGKKE (189 aa)). Positions 76, 77, and 168 each coordinate a divalent metal cation.

It belongs to the RNase HII family. Mn(2+) is required as a cofactor. Requires Mg(2+) as cofactor.

It localises to the cytoplasm. It catalyses the reaction Endonucleolytic cleavage to 5'-phosphomonoester.. Its function is as follows. Endonuclease that specifically degrades the RNA of RNA-DNA hybrids. This is Ribonuclease HII from Streptococcus pneumoniae (strain P1031).